Consider the following 88-residue polypeptide: Small ribosomal subunit protein uS17 (88 aa).

Belongs to the universal ribosomal protein uS17 family. Part of the 30S ribosomal subunit.

In terms of biological role, one of the primary rRNA binding proteins, it binds specifically to the 5'-end of 16S ribosomal RNA. This is Small ribosomal subunit protein uS17 from Lactobacillus gasseri (strain ATCC 33323 / DSM 20243 / BCRC 14619 / CIP 102991 / JCM 1131 / KCTC 3163 / NCIMB 11718 / NCTC 13722 / AM63).